The sequence spans 860 residues: Envelope glycoprotein gp160 (860 aa).

A signal peptide spans 1-22 (MEPGRNQLFVVILLTSACLVYC). Residues 23–678 (SQYVTVFYGI…LTSWVKYIQY (656 aa)) lie on the Extracellular side of the membrane. Residue Asn-37 is glycosylated (N-linked (GlcNAc...) asparagine; by host). Cys-44 and Cys-57 are oxidised to a cystine. Asn-70, Asn-79, Asn-112, Asn-119, Asn-144, Asn-152, Asn-194, Asn-206, Asn-238, Asn-241, Asn-272, Asn-278, Asn-289, Asn-300, Asn-310, Asn-365, Asn-371, Asn-398, Asn-410, Asn-460, and Asn-465 each carry an N-linked (GlcNAc...) asparagine; by host glycan. 5 disulfides stabilise this stretch: Cys-101–Cys-214, Cys-108–Cys-205, Cys-113–Cys-166, Cys-227–Cys-257, and Cys-237–Cys-249. The V1 stretch occupies residues 113 to 165 (CSRVQGNTTTPNPRTSSSTTSRPPTSAASIINETSNCIENNTCAGLGYEEMMQ). The tract at residues 118 to 139 (GNTTTPNPRTSSSTTSRPPTSA) is disordered. Over residues 119–139 (NTTTPNPRTSSSTTSRPPTSA) the composition is skewed to low complexity. Positions 166–205 (CEFNMKGLEQDKKRRYKDTWYLEDVVCDNTTAGTCYMRHC) are V2. The interval 305-337 (CKRPGNKTVLPITLMSGLVFHSQPINTRPRQAW) is V3. Cys-305 and Cys-338 are joined by a disulfide. 2 cysteine pairs are disulfide-bonded: Cys-390/Cys-444 and Cys-397/Cys-417. The V4 stretch occupies residues 397–417 (CNMTWFLNWVEDKNQTRRNYC). The V5 stretch occupies residues 460 to 468 (NRTHTNITF). Residues 511–531 (GVFVLGFLGFLATAGSAMGAR) form a fusion peptide region. Residues 574 to 590 (LQARVTAIEKYLKHQAQ) are immunosuppression. Residues Asn-610, Asn-619, and Asn-635 are each glycosylated (N-linked (GlcNAc...) asparagine; by host). A coiled-coil region spans residues 623–644 (QEWEKQVRYLEANISQSLEEAQ). The segment at 656–677 (KLNSWDILGNWFDLTSWVKYIQ) is MPER; binding to GalCer. A helical transmembrane segment spans residues 679-699 (GVHIVVGIIALRIAIYVVQLL). At 700–860 (SRFRKGYRPV…IRQGAELALL (161 aa)) the chain is on the cytoplasmic side. The YXXV motif; contains endocytosis signal motif lies at 706–709 (YRPV). Residue Cys-772 is the site of S-palmitoyl cysteine; by host attachment. The Di-leucine internalization motif signature appears at 859-860 (LL).

As to quaternary structure, the mature envelope protein (Env) consists of a homotrimer of non-covalently associated gp120-gp41 heterodimers. The resulting complex protrudes from the virus surface as a spike. There seems to be as few as 10 spikes on the average virion. Interacts with human CD4, CCR5 and CXCR4, to form a P4HB/PDI-CD4-CXCR4-gp120 complex. Gp120 also interacts with the C-type lectins CD209/DC-SIGN and CLEC4M/DC-SIGNR (collectively referred to as DC-SIGN(R)). Gp120 and gp41 interact with GalCer. The mature envelope protein (Env) consists of a homotrimer of non-covalently associated gp120-gp41 heterodimers. The resulting complex protrudes from the virus surface as a spike. There seems to be as few as 10 spikes on the average virion. Post-translationally, specific enzymatic cleavages in vivo yield mature proteins. Envelope glycoproteins are synthesized as an inactive precursor that is heavily N-glycosylated and processed likely by host cell furin in the Golgi to yield the mature SU and TM proteins. The cleavage site between SU and TM requires the minimal sequence [KR]-X-[KR]-R. In terms of processing, palmitoylation of the transmembrane protein and of Env polyprotein (prior to its proteolytic cleavage) is essential for their association with host cell membrane lipid rafts. Palmitoylation is therefore required for envelope trafficking to classical lipid rafts, but not for viral replication.

The protein localises to the virion membrane. It is found in the host cell membrane. Its subcellular location is the host endosome membrane. Its function is as follows. The surface protein gp120 (SU) attaches the virus to the host lymphoid cell by binding to the primary receptor CD4. This interaction induces a structural rearrangement creating a high affinity binding site for a chemokine coreceptor like CXCR4 and/or CCR5. This peculiar 2 stage receptor-interaction strategy allows gp120 to maintain the highly conserved coreceptor-binding site in a cryptic conformation, protected from neutralizing antibodies. Since CD4 also displays a binding site for the disulfide-isomerase P4HB/PDI, a P4HB/PDI-CD4-CXCR4-gp120 complex may form. In that complex, P4HB/PDI could reach and reduce gp120 disulfide bonds, causing major conformational changes in gp120. TXN, another PDI family member could also be involved in disulfide rearrangements in Env during fusion. These changes are transmitted to the transmembrane protein gp41 and are thought to activate its fusogenic potential by unmasking its fusion peptide. The surface protein gp120 is a ligand for CD209/DC-SIGN and CLEC4M/DC-SIGNR, which are respectively found on dendritic cells (DCs), and on endothelial cells of liver sinusoids and lymph node sinuses. These interactions allow capture of viral particles at mucosal surfaces by these cells and subsequent transmission to permissive cells. DCs are professional antigen presenting cells, critical for host immunity by inducing specific immune responses against a broad variety of pathogens. They act as sentinels in various tissues where they take up antigen, process it, and present it to T-cells following migration to lymphoid organs. HIV subverts the migration properties of dendritic cells to gain access to CD4+ T-cells in lymph nodes. Virus transmission to permissive T-cells occurs either in trans (without DCs infection, through viral capture and transmission), or in cis (following DCs productive infection, through the usual CD4-gp120 interaction), thereby inducing a robust infection. In trans infection, bound virions remain infectious over days and it is proposed that they are not degraded, but protected in non-lysosomal acidic organelles within the DCs close to the cell membrane thus contributing to the viral infectious potential during DCs' migration from the periphery to the lymphoid tissues. On arrival at lymphoid tissues, intact virions recycle back to DCs' cell surface allowing virus transmission to CD4+ T-cells. Virion capture also seems to lead to MHC-II-restricted viral antigen presentation, and probably to the activation of HIV-specific CD4+ cells. In terms of biological role, the transmembrane protein gp41 (TM) acts as a class I viral fusion protein. Under the current model, the protein has at least 3 conformational states: pre-fusion native state, pre-hairpin intermediate state, and post-fusion hairpin state. During fusion of viral and target intracellular membranes, the coiled coil regions (heptad repeats) assume a trimer-of-hairpins structure, positioning the fusion peptide in close proximity to the C-terminal region of the ectodomain. The formation of this structure appears to drive apposition and subsequent fusion of viral and target cell membranes. Complete fusion occurs in host cell endosomes and is dynamin-dependent, however some lipid transfer might occur at the plasma membrane. The virus undergoes clathrin-dependent internalization long before endosomal fusion, thus minimizing the surface exposure of conserved viral epitopes during fusion and reducing the efficacy of inhibitors targeting these epitopes. Membranes fusion leads to delivery of the nucleocapsid into the cytoplasm. Functionally, the envelope glycoprotein gp160 precursor down-modulates cell surface CD4 antigen by interacting with it in the endoplasmic reticulum and blocking its transport to the cell surface. Its function is as follows. The gp120-gp41 heterodimer seems to contribute to T-cell depletion during HIV-1 infection. The envelope glycoproteins expressed on the surface of infected cells induce apoptosis through an interaction with uninfected cells expressing the receptor (CD4) and the coreceptors CXCR4 or CCR5. This type of bystander killing may be obtained by at least three distinct mechanisms. First, the interaction between the 2 cells can induce cellular fusion followed by nuclear fusion within the syncytium. Syncytia are condemned to die from apoptosis. Second, the 2 interacting cells may not fuse entirely and simply exchange plasma membrane lipids, after a sort of hemifusion process, followed by rapid death. Third, it is possible that virus-infected cells, on the point of undergoing apoptosis, fuse with CD4-expressing cells, in which case apoptosis is rapidly transmitted from one cell to the other and thus occurs in a sort of contagious fashion. The gp120-gp41 heterodimer allows rapid transcytosis of the virus through CD4 negative cells such as simple epithelial monolayers of the intestinal, rectal and endocervical epithelial barriers. Both gp120 and gp41 specifically recognize glycosphingolipids galactosyl-ceramide (GalCer) or 3' sulfo-galactosyl-ceramide (GalS) present in the lipid rafts structures of epithelial cells. Binding to these alternative receptors allows the rapid transcytosis of the virus through the epithelial cells. This transcytotic vesicle-mediated transport of virions from the apical side to the basolateral side of the epithelial cells does not involve infection of the cells themselves. This Homo sapiens (Human) protein is Envelope glycoprotein gp160 (env).